Here is a 509-residue protein sequence, read N- to C-terminus: ATP synthase subunit alpha (509 aa).

An ATP-binding site is contributed by 169–176 (GDRQTGKT).

This sequence belongs to the ATPase alpha/beta chains family. As to quaternary structure, F-type ATPases have 2 components, CF(1) - the catalytic core - and CF(0) - the membrane proton channel. CF(1) has five subunits: alpha(3), beta(3), gamma(1), delta(1), epsilon(1). CF(0) has three main subunits: a(1), b(2) and c(9-12). The alpha and beta chains form an alternating ring which encloses part of the gamma chain. CF(1) is attached to CF(0) by a central stalk formed by the gamma and epsilon chains, while a peripheral stalk is formed by the delta and b chains.

It localises to the cell inner membrane. It carries out the reaction ATP + H2O + 4 H(+)(in) = ADP + phosphate + 5 H(+)(out). In terms of biological role, produces ATP from ADP in the presence of a proton gradient across the membrane. The alpha chain is a regulatory subunit. This chain is ATP synthase subunit alpha, found in Methylocella silvestris (strain DSM 15510 / CIP 108128 / LMG 27833 / NCIMB 13906 / BL2).